The following is a 1065-amino-acid chain: Carbamoyl phosphate synthase large chain (1065 aa).

The segment at 1 to 401 (MPLDKTIKKV…ALLKAVTSLE (401 aa)) is carboxyphosphate synthetic domain. 12 residues coordinate ATP: Arg-129, Arg-169, Gly-175, Gly-176, Gln-208, Val-210, Glu-215, Gly-241, Val-242, His-243, Gln-284, and Glu-298. The region spanning 133 to 327 (KNLMEEIDEP…IAKIAAKIAV (195 aa)) is the ATP-grasp 1 domain. Residues Gln-284, Glu-298, and Asn-300 each contribute to the Mg(2+) site. Residues Gln-284, Glu-298, and Asn-300 each coordinate Mn(2+). The oligomerization domain stretch occupies residues 402-548 (GKISGLRLEK…YSSYENEDEN (147 aa)). The tract at residues 549-931 (EVTDDKKIVV…AIYKGFRAAG (383 aa)) is carbamoyl phosphate synthetic domain. One can recognise an ATP-grasp 2 domain in the interval 673–863 (SELLKELNIP…MVKLAVEILT (191 aa)). The ATP site is built by Arg-709, Lys-748, Ile-750, Glu-754, Gly-779, Val-780, His-781, Ser-782, Gln-822, and Glu-834. 3 residues coordinate Mg(2+): Gln-822, Glu-834, and Asn-836. Positions 822, 834, and 836 each coordinate Mn(2+). An MGS-like domain is found at 932-1065 (IEVPKDGGNL…EYRAMKEYFK (134 aa)). The segment at 932–1065 (IEVPKDGGNL…EYRAMKEYFK (134 aa)) is allosteric domain.

This sequence belongs to the CarB family. In terms of assembly, composed of two chains; the small (or glutamine) chain promotes the hydrolysis of glutamine to ammonia, which is used by the large (or ammonia) chain to synthesize carbamoyl phosphate. Tetramer of heterodimers (alpha,beta)4. The cofactor is Mg(2+). Mn(2+) is required as a cofactor.

The enzyme catalyses hydrogencarbonate + L-glutamine + 2 ATP + H2O = carbamoyl phosphate + L-glutamate + 2 ADP + phosphate + 2 H(+). The catalysed reaction is hydrogencarbonate + NH4(+) + 2 ATP = carbamoyl phosphate + 2 ADP + phosphate + 2 H(+). It functions in the pathway amino-acid biosynthesis; L-arginine biosynthesis; carbamoyl phosphate from bicarbonate: step 1/1. The protein operates within pyrimidine metabolism; UMP biosynthesis via de novo pathway; (S)-dihydroorotate from bicarbonate: step 1/3. In terms of biological role, large subunit of the glutamine-dependent carbamoyl phosphate synthetase (CPSase). CPSase catalyzes the formation of carbamoyl phosphate from the ammonia moiety of glutamine, carbonate, and phosphate donated by ATP, constituting the first step of 2 biosynthetic pathways, one leading to arginine and/or urea and the other to pyrimidine nucleotides. The large subunit (synthetase) binds the substrates ammonia (free or transferred from glutamine from the small subunit), hydrogencarbonate and ATP and carries out an ATP-coupled ligase reaction, activating hydrogencarbonate by forming carboxy phosphate which reacts with ammonia to form carbamoyl phosphate. The sequence is that of Carbamoyl phosphate synthase large chain from Clostridium acetobutylicum (strain ATCC 824 / DSM 792 / JCM 1419 / IAM 19013 / LMG 5710 / NBRC 13948 / NRRL B-527 / VKM B-1787 / 2291 / W).